A 138-amino-acid chain; its full sequence is MLIPKRVKYRRQHRPTRSGVSKGGNRINFGDYAIQALEPAYITNRQIEAARIAINRHVKRGGKVWINIFPDRPLTQKPLGVRMGSGKGPVEKWVANVKPGRILFEMTYPNEATAIEALRRAGQKLPCKVRIIKKEDQF.

A compositionally biased stretch (basic residues) spans 1–16; it reads MLIPKRVKYRRQHRPT. The segment at 1–23 is disordered; it reads MLIPKRVKYRRQHRPTRSGVSKG.

Belongs to the universal ribosomal protein uL16 family. Part of the 50S ribosomal subunit.

Its function is as follows. Binds 23S rRNA and is also seen to make contacts with the A and possibly P site tRNAs. The protein is Large ribosomal subunit protein uL16 of Corynebacterium aurimucosum (strain ATCC 700975 / DSM 44827 / CIP 107346 / CN-1) (Corynebacterium nigricans).